A 152-amino-acid polypeptide reads, in one-letter code: Leukocyte-associated immunoglobulin-like receptor 2 (152 aa).

The first 21 residues, 1-21 (MSPHLTALLGLVLCLAQTIHT), serve as a signal peptide directing secretion. An Ig-like C2-type domain is found at 29–117 (PSISAEPGTV…GWSEHSDFLE (89 aa)). Cysteine 49 and cysteine 101 form a disulfide bridge. Residues 120-152 (VKESSGGPDSPDTEPGSSAGTVPGTEASGFDAP) are disordered.

The protein localises to the secreted. The protein is Leukocyte-associated immunoglobulin-like receptor 2 (LAIR2) of Homo sapiens (Human).